The primary structure comprises 245 residues: Probable transcriptional regulatory protein BF2589 (245 aa).

Residues 225-245 are disordered; the sequence is EDEDVQNVYTNMKPADNEGEE.

The protein belongs to the TACO1 family.

The protein localises to the cytoplasm. The sequence is that of Probable transcriptional regulatory protein BF2589 from Bacteroides fragilis (strain ATCC 25285 / DSM 2151 / CCUG 4856 / JCM 11019 / LMG 10263 / NCTC 9343 / Onslow / VPI 2553 / EN-2).